We begin with the raw amino-acid sequence, 638 residues long: Threonine--tRNA ligase (638 aa).

A TGS domain is found at 1–63 (MVMIQIELPD…TESGRLEIIT (63 aa)). A catalytic region spans residues 245-536 (DHRRIGRELD…LIEHYAGNFP (292 aa)). 3 residues coordinate Zn(2+): Cys-337, His-388, and His-513.

It belongs to the class-II aminoacyl-tRNA synthetase family. In terms of assembly, homodimer. The cofactor is Zn(2+).

It localises to the cytoplasm. It carries out the reaction tRNA(Thr) + L-threonine + ATP = L-threonyl-tRNA(Thr) + AMP + diphosphate + H(+). Catalyzes the attachment of threonine to tRNA(Thr) in a two-step reaction: L-threonine is first activated by ATP to form Thr-AMP and then transferred to the acceptor end of tRNA(Thr). Also edits incorrectly charged L-seryl-tRNA(Thr). This chain is Threonine--tRNA ligase, found in Syntrophotalea carbinolica (strain DSM 2380 / NBRC 103641 / GraBd1) (Pelobacter carbinolicus).